Reading from the N-terminus, the 193-residue chain is MAVSPDDPLILVGRVAGGFGVRGEVRITTYTEDPLSIAGFKALKRQDGSPALTIASARKTKDGVVCRCPGVETKEAADALRGLRLYVPRSALPEPDDDEFYLTDLVGLTVRHIQTDQLLGRVKSVQNFGAGDILEITPDLGGPTWYLPFTRAAVPEVRVSEGLILADPPALVGDHEGPEEKGLDENEELGDRD.

Positions 97-172 (DDEFYLTDLV…LILADPPALV (76 aa)) constitute a PRC barrel domain. The disordered stretch occupies residues 168-193 (PPALVGDHEGPEEKGLDENEELGDRD). Basic and acidic residues predominate over residues 173–193 (GDHEGPEEKGLDENEELGDRD).

The protein belongs to the RimM family. In terms of assembly, binds ribosomal protein uS19.

The protein localises to the cytoplasm. In terms of biological role, an accessory protein needed during the final step in the assembly of 30S ribosomal subunit, possibly for assembly of the head region. Essential for efficient processing of 16S rRNA. May be needed both before and after RbfA during the maturation of 16S rRNA. It has affinity for free ribosomal 30S subunits but not for 70S ribosomes. In Caulobacter vibrioides (strain ATCC 19089 / CIP 103742 / CB 15) (Caulobacter crescentus), this protein is Ribosome maturation factor RimM.